The sequence spans 195 residues: Ras-related protein rac-2 (195 aa).

10–17 provides a ligand contact to GTP; that stretch reads GDGAVGKT. An Effector region motif is present at residues 32 to 40; that stretch reads YILTVFDTY. GTP-binding positions include 57–61 and 115–118; these read DTAGQ and TKAD. The tract at residues 176–195 is disordered; sequence GLTPPQTPQTRAKKSNCTVL. Cysteine methyl ester is present on Cys192. Cys192 carries S-geranylgeranyl cysteine lipidation. The propeptide at 193 to 195 is removed in mature form; the sequence is TVL.

Belongs to the small GTPase superfamily. Rho family.

It is found in the cell membrane. Functionally, during gonad morphogenesis, plays a role in distal tip cell (DTC)-mediated guidance of gonad elongation. The chain is Ras-related protein rac-2 (rac-2) from Caenorhabditis elegans.